Reading from the N-terminus, the 167-residue chain is MKITSGDLPGVGKKISFITSEGSMVVLVIHHTGKREMYFFDDADDDEVSFSLTLSAEETKQMGAQLLGAILNPADTDKIDRIKLIRKQVVVEWIDITKHSPIISKSIAQIEKMKPKGISIVGVFKNDEMMVDPEPTLVLEKGDTLMAVGKRDAIQKFEELCACKENN.

An RCK C-terminal domain is found at 79 to 163; the sequence is IDRIKLIRKQ…IQKFEELCAC (85 aa).

As to quaternary structure, interacts with AmhT.

It localises to the cell membrane. Functionally, modulates the activity of the ammonium/proton antiporter AmhT. This chain is Ammonium/H(+) antiporter subunit AmhM (amhM), found in Alkalihalophilus pseudofirmus (strain ATCC BAA-2126 / JCM 17055 / OF4) (Bacillus pseudofirmus).